The sequence spans 23 residues: Septenin 2 (23 aa).

As to expression, expressed in skin glands.

It localises to the secreted. Functionally, may act as an antimicrobial peptide. This Osteopilus septentrionalis (Cuban treefrog) protein is Septenin 2.